The primary structure comprises 332 residues: Fructose-1,6-bisphosphatase class 1 (332 aa).

Mg(2+) contacts are provided by E93, D113, L115, and D116. Substrate is bound by residues 116–119, N209, Y235, and K272; that span reads DGSS. Residue E278 coordinates Mg(2+).

Belongs to the FBPase class 1 family. As to quaternary structure, homotetramer. Mg(2+) serves as cofactor.

The protein resides in the cytoplasm. It catalyses the reaction beta-D-fructose 1,6-bisphosphate + H2O = beta-D-fructose 6-phosphate + phosphate. It functions in the pathway carbohydrate biosynthesis; gluconeogenesis. In Syntrophus aciditrophicus (strain SB), this protein is Fructose-1,6-bisphosphatase class 1.